Here is a 598-residue protein sequence, read N- to C-terminus: UvrABC system protein C (598 aa).

One can recognise a GIY-YIG domain in the interval 14–91 (DSPGCYLHKD…IQKNMPKYNI (78 aa)). One can recognise a UVR domain in the interval 196–231 (DKIIEDLRSKMLAASEEMAFERAAEYRDLISGIATM).

It belongs to the UvrC family. Interacts with UvrB in an incision complex.

It localises to the cytoplasm. Its function is as follows. The UvrABC repair system catalyzes the recognition and processing of DNA lesions. UvrC both incises the 5' and 3' sides of the lesion. The N-terminal half is responsible for the 3' incision and the C-terminal half is responsible for the 5' incision. The polypeptide is UvrABC system protein C (Streptococcus pyogenes serotype M12 (strain MGAS2096)).